A 459-amino-acid chain; its full sequence is Pentatricopeptide repeat-containing protein At1g07740, mitochondrial (459 aa).

The transit peptide at 1–20 directs the protein to the mitochondrion; sequence MRRRLSSVLINNQCIASQRH. Positions 19 to 41 are disordered; it reads RHYHTSRPEKPTKKASSHEPTHK. The segment covering 24 to 41 has biased composition (basic and acidic residues); that stretch reads SRPEKPTKKASSHEPTHK. PPR repeat units follow at residues 80–114, 115–149, 150–184, 185–219, 220–254, 255–289, 290–324, 325–359, 360–394, and 395–429; these read DYPS…NVRC, RESL…DCVR, TIQS…RLRP, NSVS…EVQP, SVVT…RIRP, NAVT…GCKP, GLVN…RIKP, DVVI…GCKP, NAAT…RHCP, and TPAT…NLSF.

Belongs to the PPR family. P subfamily.

The protein localises to the mitochondrion. The chain is Pentatricopeptide repeat-containing protein At1g07740, mitochondrial from Arabidopsis thaliana (Mouse-ear cress).